A 437-amino-acid chain; its full sequence is O-methyltransferase elcB (437 aa).

Position 269 (Asp-269) interacts with S-adenosyl-L-methionine. His-319 acts as the Proton acceptor in catalysis.

It belongs to the class I-like SAM-binding methyltransferase superfamily. Cation-independent O-methyltransferase family. COMT subfamily.

The protein operates within secondary metabolite biosynthesis. Its function is as follows. O-methyltransferase; part of the gene cluster that mediates the biosynthesis of elsinochrome C, a perelyenequinone phytotoxin structurally similar to cercosporin. The first step of elsinochrome C biosynthesis is performed by the polyketide synthase elcA which catalyzes the formation of nor-toralactone. The starter unit acyltransferase (SAT) domain of elcA initiates polyketide extension by the selective utilization of acetyl-CoA, which is elongated to the heptaketide in the beta-ketoacyl synthase (KS) domain by successive condensations with six malonyl units introduced by the malonyl acyltransferase (MAT) domain. The product template (PT) domain catalyzes C4-C9 and C2-C11 aldol cyclizations and dehydrations to a trihydroxynaphthalene, which is thought to be delivered to the thioesterase (TE) domain for product release. The bifunctional enzyme elcB then methylates nor-toralactone to toralactone before conducting an unusual oxidative aromatic ring opening. The next step in perylenequinone biosynthesis is an O-methylation at the nascent OH-6 of the elcB product performed by the O-methyltransferase elcD. The oxidative coupling of the two monomeric naphthol units in perylenequinone biosynthesis is catalyzed by the FAD-dependent monooxygenase elcE and the multicopper oxidase elcG. ElcG might catalyze the first intermolecular coupling in a regio- and stereo-selective manner via a phenol radical coupling mechanism and the elcE could forge the second C-C bond intramolecularly via a hydride transfer mechanism. The fasciclin domain-containing protein elcF might also play a role duting this step. The last piece of the puzzle in the biosynthesis of elsinochrome C is the additional annulation by enolate coupling to afford the dihydrobenzo(ghi)perylenequinone system, catalyzed by the FAD-dependent monooxygenase elcH. This Phaeosphaeria nodorum (strain SN15 / ATCC MYA-4574 / FGSC 10173) (Glume blotch fungus) protein is O-methyltransferase elcB.